The chain runs to 207 residues: uncharacterized protein (207 aa).

Its subcellular location is the mitochondrion. This is an uncharacterized protein from Marchantia polymorpha (Common liverwort).